Reading from the N-terminus, the 616-residue chain is Chaperone protein HscA homolog (616 aa).

The protein belongs to the heat shock protein 70 family.

In terms of biological role, chaperone involved in the maturation of iron-sulfur cluster-containing proteins. Has a low intrinsic ATPase activity which is markedly stimulated by HscB. The sequence is that of Chaperone protein HscA homolog from Histophilus somni (strain 129Pt) (Haemophilus somnus).